The sequence spans 65 residues: Myotoxin-1 (65 aa).

Positions 1–22 (MKILYLLFAFLFLAFLSEPGNA) are cleaved as a signal peptide. Cystine bridges form between Cys26–Cys58, Cys33–Cys52, and Cys40–Cys59.

Belongs to the crotamine-myotoxin family. In terms of assembly, monomer. As to expression, expressed by the venom gland.

Its subcellular location is the secreted. Functionally, cationic peptide that possesses multiple functions. It acts as a cell-penetrating peptide (CPP), and as a potent voltage-gated potassium channel (Kv) inhibitor. It exhibits antimicrobial activities, hind limb paralysis, and severe muscle necrosis by a non-enzymatic mechanism. The protein is Myotoxin-1 of Crotalus durissus terrificus (South American rattlesnake).